The chain runs to 436 residues: uncharacterized protein (436 aa).

An N-terminal signal peptide occupies residues 1–18; the sequence is MMKRFVALSMAIFSLSFA.

This is an uncharacterized protein from Aquifex aeolicus (strain VF5).